A 274-amino-acid chain; its full sequence is Guanylyl cyclase 1 (274 aa).

In terms of assembly, functions both as monomer and homooligomer. Mg(2+) serves as cofactor.

It catalyses the reaction GTP = 3',5'-cyclic GMP + diphosphate. It participates in nucleotide metabolism. Functionally, magnesium-dependent guanylyl cyclase that catalyzes the formation of guanosine 3',5'-cyclic monophosphate (cGMP) from guanosine 5'-triphosphate (GTP). Can also use ATP as substrate with a low activity. This chain is Guanylyl cyclase 1, found in Arabidopsis thaliana (Mouse-ear cress).